A 262-amino-acid polypeptide reads, in one-letter code: Calbindin (262 aa).

Residue Thr-2 is modified to N-acetylthreonine. 5 EF-hand domains span residues 12-47 (ISAA…LQQA), 54-89 (DLTP…EENF), 99-134 (KSSE…LLQK), 143-178 (KLTE…QENF), and 187-222 (MCAK…LCEK). Positions 25, 27, 29, 31, and 36 each coordinate Ca(2+). Ca(2+) is bound by residues Asp-112, Asp-114, Ser-116, Glu-123, Asp-156, Asn-158, Asp-160, Lys-162, Glu-167, Asp-200, Asp-202, Asn-204, Tyr-206, and Glu-211.

This sequence belongs to the calbindin family. As to expression, highly abundant in supporting cells. Also present in hair cells.

Functionally, buffers cytosolic calcium. May stimulate a membrane Ca(2+)-ATPase and a 3',5'-cyclic nucleotide phosphodiesterase. This chain is Calbindin (CALB1), found in Gallus gallus (Chicken).